The chain runs to 500 residues: Cholesterol 24-hydroxylase (500 aa).

The helical transmembrane segment at Pro-3–Val-23 threads the bilayer. Position 437 (Cys-437) interacts with heme.

Belongs to the cytochrome P450 family. The cofactor is heme. Expressed in high level in the pyramidal cells of the hippocampus, Purkinje cells of the cerebellum, and neuronal cell bodies in layers II/III, V, and VI of the cortex. Expressed in hippocampal and cerebellar interneurons, in retinal ganglion cells, and in a subset of retinal cells localized to the inner nuclear layer (at protein level).

It is found in the endoplasmic reticulum membrane. The protein localises to the microsome membrane. Its subcellular location is the postsynapse. It localises to the presynapse. The protein resides in the cell projection. It is found in the dendrite. The enzyme catalyses cholesterol + reduced [NADPH--hemoprotein reductase] + O2 = (24S)-hydroxycholesterol + oxidized [NADPH--hemoprotein reductase] + H2O + H(+). It catalyses the reaction cholestanol + reduced [NADPH--hemoprotein reductase] + O2 = (24S)-hydroxycholestanol + oxidized [NADPH--hemoprotein reductase] + H2O + H(+). It carries out the reaction 7-dehydrocholesterol + reduced [NADPH--hemoprotein reductase] + O2 = cholesta-5,7-dien-3beta,24S-diol + oxidized [NADPH--hemoprotein reductase] + H2O + H(+). The catalysed reaction is 7-dehydrocholesterol + reduced [NADPH--hemoprotein reductase] + O2 = cholesta-5,7-dien-3beta,25-diol + oxidized [NADPH--hemoprotein reductase] + H2O + H(+). The enzyme catalyses desmosterol + reduced [NADPH--hemoprotein reductase] + O2 = (24Z),26-hydroxydesmosterol + oxidized [NADPH--hemoprotein reductase] + H2O + H(+). It catalyses the reaction desmosterol + reduced [NADPH--hemoprotein reductase] + O2 = (24S)-25-epoxycholesterol + oxidized [NADPH--hemoprotein reductase] + H2O + H(+). It carries out the reaction 4beta-hydroxycholesterol + reduced [NADPH--hemoprotein reductase] + O2 = 4beta,24S-dihydroxycholesterol + oxidized [NADPH--hemoprotein reductase] + H2O + H(+). The catalysed reaction is (24S)-hydroxycholesterol + reduced [NADPH--hemoprotein reductase] + O2 = (24S,25R)-24,26-dihydroxycholesterol + oxidized [NADPH--hemoprotein reductase] + H2O + H(+). The enzyme catalyses (24S)-hydroxycholesterol + reduced [NADPH--hemoprotein reductase] + O2 = 24S,25-dihydroxycholesterol + oxidized [NADPH--hemoprotein reductase] + H2O + H(+). It catalyses the reaction 7alpha-hydroxycholesterol + reduced [NADPH--hemoprotein reductase] + O2 = (24S)-7alpha-dihydroxycholesterol + oxidized [NADPH--hemoprotein reductase] + H2O + H(+). It carries out the reaction progesterone + reduced [NADPH--hemoprotein reductase] + O2 = 17alpha-hydroxyprogesterone + oxidized [NADPH--hemoprotein reductase] + H2O + H(+). The catalysed reaction is testosterone + reduced [NADPH--hemoprotein reductase] + O2 = 16beta,17beta-dihydroxyandrost-4-en-3-one + oxidized [NADPH--hemoprotein reductase] + H2O + H(+). The enzyme catalyses testosterone + reduced [NADPH--hemoprotein reductase] + O2 = 2-hydroxytestosterone + oxidized [NADPH--hemoprotein reductase] + H2O + H(+). It catalyses the reaction testosterone + reduced [NADPH--hemoprotein reductase] + O2 = 6beta,17beta-dihydroxyandrost-4-en-3-one + oxidized [NADPH--hemoprotein reductase] + H2O + H(+). It functions in the pathway steroid metabolism; cholesterol degradation. It participates in lipid metabolism; C21-steroid hormone metabolism. In terms of biological role, P450 monooxygenase that plays a major role in cholesterol homeostasis in the brain. Primarily catalyzes the hydroxylation (with S stereochemistry) at C-24 of cholesterol side chain, triggering cholesterol diffusion out of neurons and its further degradation. By promoting constant cholesterol elimination in neurons, may activate the mevalonate pathway and coordinate the synthesis of new cholesterol and nonsterol isoprenoids involved in synaptic activity and learning. Further hydroxylates cholesterol derivatives and hormone steroids on both the ring and side chain of these molecules, converting them into active oxysterols involved in lipid signaling and biosynthesis. Acts as an epoxidase converting cholesta-5,24-dien-3beta-ol/desmosterol into (24S),25-epoxycholesterol, an abundant lipid ligand of nuclear NR1H2 and NR1H3 receptors shown to promote neurogenesis in developing brain. May also catalyze the oxidative metabolism of xenobiotics, such as clotrimazole. This is Cholesterol 24-hydroxylase from Mus musculus (Mouse).